The chain runs to 138 residues: UPF0201 protein PH1010 (138 aa).

This sequence belongs to the UPF0201 family.

The protein is UPF0201 protein PH1010 of Pyrococcus horikoshii (strain ATCC 700860 / DSM 12428 / JCM 9974 / NBRC 100139 / OT-3).